Reading from the N-terminus, the 404-residue chain is MNVLWGLLGAVAIIAIAFLFSEKKSNIKIRTVIVGLCTQVAFGYIVLKWEAGRAVFLWFSSRVQLLIDYANEGISFIFGPLLKVGDSPAFALSVLPVIIFFSALIAVLYHLKIMQLVFRVIGGGLSKLLGTSKTESLAAAANIFVGQSESPLVIKPLIAGLTRSELFTIMTSGLSAVAGSTLFGYALLGIPIEYLLAASFMAAPAGLVFGKLIIPETEKTQTVKSDFKMDEGEGAANVIDAAAKGASTGLQIALNVGAMLLAFVALIAVVNGILGGAFGLFGLKGVTLESILGYVFSPIAFLIGVPWHEALQAGSYIGQKLVLNEFVAYSNFGSHIGEFSKKTATIISFALCGFANFSSIAIMLGTLGGLAPSRRSDIARLGLKAVLAGTLANLLSAAIAGMFI.

The next 8 helical transmembrane spans lie at 1–21 (MNVL…FLFS), 32–52 (VIVG…WEAG), 89–109 (AFAL…AVLY), 182–202 (LFGY…SFMA), 261–281 (LAFV…FGLF), 285–305 (GVTL…LIGV), 344–364 (ATII…AIML), and 384–404 (KAVL…GMFI).

The protein belongs to the concentrative nucleoside transporter (CNT) (TC 2.A.41) family.

The protein localises to the cell membrane. This is an uncharacterized protein from Bacillus subtilis (strain 168).